Reading from the N-terminus, the 223-residue chain is Small ribosomal subunit protein uS3 (223 aa).

Residues 38-106 form the KH type-2 domain; sequence LKRELKEKLK…EVFIDILEVN (69 aa).

This sequence belongs to the universal ribosomal protein uS3 family. Part of the 30S ribosomal subunit. Forms a tight complex with proteins S10 and S14.

Binds the lower part of the 30S subunit head. Binds mRNA in the 70S ribosome, positioning it for translation. The polypeptide is Small ribosomal subunit protein uS3 (Acidobacterium capsulatum (strain ATCC 51196 / DSM 11244 / BCRC 80197 / JCM 7670 / NBRC 15755 / NCIMB 13165 / 161)).